The primary structure comprises 221 residues: Josephin-like protein (221 aa).

The interval 1 to 37 is disordered; that stretch reads MESPSARTLGNSLGDDSGNGNENGNGSGNGNTTMMPH. Over residues 9 to 20 the composition is skewed to low complexity; that stretch reads LGNSLGDDSGNG. The region spanning 36 to 214 is the Josephin domain; sequence PHGIYHERQT…DCKDKSQQRW (179 aa). Cysteine 49 functions as the Nucleophile in the catalytic mechanism. Histidine 152 functions as the Proton acceptor in the catalytic mechanism.

It carries out the reaction Thiol-dependent hydrolysis of ester, thioester, amide, peptide and isopeptide bonds formed by the C-terminal Gly of ubiquitin (a 76-residue protein attached to proteins as an intracellular targeting signal).. In terms of biological role, may act as a deubiquitinating enzyme. The polypeptide is Josephin-like protein (Drosophila melanogaster (Fruit fly)).